The chain runs to 73 residues: Protein SlyX homolog (73 aa).

Belongs to the SlyX family.

The polypeptide is Protein SlyX homolog (Histophilus somni (strain 2336) (Haemophilus somnus)).